The chain runs to 213 residues: Chloramphenicol acetyltransferase 3 (213 aa).

Histidine 189 acts as the Proton acceptor in catalysis.

This sequence belongs to the chloramphenicol acetyltransferase family. In terms of assembly, homotrimer.

It carries out the reaction chloramphenicol + acetyl-CoA = chloramphenicol 3-acetate + CoA. In terms of biological role, this enzyme is an effector of chloramphenicol resistance in bacteria. This is Chloramphenicol acetyltransferase 3 (cat3) from Escherichia coli.